The sequence spans 271 residues: Formamidopyrimidine-DNA glycosylase (271 aa).

Catalysis depends on Pro-2, which acts as the Schiff-base intermediate with DNA. Residue Glu-3 is the Proton donor of the active site. Lys-57 functions as the Proton donor; for beta-elimination activity in the catalytic mechanism. DNA is bound by residues His-90, Arg-109, and Lys-151. The segment at 236-270 (HVYGRGGETCTQCGNLLSEIRLGQRTTVFCGICQT) adopts an FPG-type zinc-finger fold. Arg-260 (proton donor; for delta-elimination activity) is an active-site residue.

It belongs to the FPG family. In terms of assembly, monomer. It depends on Zn(2+) as a cofactor.

The catalysed reaction is Hydrolysis of DNA containing ring-opened 7-methylguanine residues, releasing 2,6-diamino-4-hydroxy-5-(N-methyl)formamidopyrimidine.. The enzyme catalyses 2'-deoxyribonucleotide-(2'-deoxyribose 5'-phosphate)-2'-deoxyribonucleotide-DNA = a 3'-end 2'-deoxyribonucleotide-(2,3-dehydro-2,3-deoxyribose 5'-phosphate)-DNA + a 5'-end 5'-phospho-2'-deoxyribonucleoside-DNA + H(+). Functionally, involved in base excision repair of DNA damaged by oxidation or by mutagenic agents. Acts as a DNA glycosylase that recognizes and removes damaged bases. Has a preference for oxidized purines, such as 7,8-dihydro-8-oxoguanine (8-oxoG). Has AP (apurinic/apyrimidinic) lyase activity and introduces nicks in the DNA strand. Cleaves the DNA backbone by beta-delta elimination to generate a single-strand break at the site of the removed base with both 3'- and 5'-phosphates. The polypeptide is Formamidopyrimidine-DNA glycosylase (Shewanella sp. (strain MR-4)).